The chain runs to 201 residues: Receptor expression-enhancing protein 6 (201 aa).

3 consecutive transmembrane segments (helical) span residues 36-56 (LAAGALALLGLYLLFGYGASL), 89-109 (WVVYALFGLVEFFSDLLLFWF), and 117-137 (CAFLLFCMTPGPWNGALLLYH).

Belongs to the DP1 family. As to quaternary structure, interacts with STX3. Interacts with clathrin. In terms of tissue distribution, expressed in the inner segment of rod photoreceptors and outer plexiform layer of the retina (at protein level). Expressed in liver, but not detected in brain, muscle, kidney, retinal cone photoreceptors or retinal ganglion cells (at protein level). Highly expressed in the ganglion cell layer of the retina and in liver, and also detected at low levels in kidney and testis. Isoform 1: Expressed in the retina. Isoform 2: Expressed in liver.

It localises to the endoplasmic reticulum membrane. The protein resides in the cytoplasmic vesicle. It is found in the clathrin-coated vesicle membrane. Required for correct function and survival of retinal photoreceptors. Required for retinal development. In rod photoreceptors, facilitates stability and/or trafficking of guanylate cyclases and is required to maintain endoplasmic reticulum and mitochondrial homeostasis. May play a role in clathrin-coated intracellular vesicle trafficking of proteins from the endoplasmic reticulum to the retinal rod plasma membrane. In Mus musculus (Mouse), this protein is Receptor expression-enhancing protein 6 (Reep6).